Reading from the N-terminus, the 194-residue chain is MAENLAGNDRLIWIDLEMTGLDTDRDSIIEIATIVTDAQLNVLAEGPELAIAHPLETLEAMDEWNRNQHRRSGLWQRVLDSQVTHAQAEAQTVAFLSEWIRAGASPMCGNSICQDRRFLHRQMSRLERYFHYRNLDVSTIKELARRWAPSVANGFAKSSAHTALSDVRDSIDELRHYRQFMGALGGDAAAGVEG.

The Exonuclease domain maps to 11–174 (LIWIDLEMTG…SDVRDSIDEL (164 aa)). The active site involves Tyr132.

Belongs to the oligoribonuclease family.

It is found in the cytoplasm. In terms of biological role, 3'-to-5' exoribonuclease specific for small oligoribonucleotides. The protein is Oligoribonuclease of Xanthomonas euvesicatoria pv. vesicatoria (strain 85-10) (Xanthomonas campestris pv. vesicatoria).